A 174-amino-acid polypeptide reads, in one-letter code: Type II restriction enzyme Bsp6I (174 aa).

It catalyses the reaction Endonucleolytic cleavage of DNA to give specific double-stranded fragments with terminal 5'-phosphates.. A P subtype restriction enzyme that recognizes the double-stranded sequence 5'-GCNGC-3' and cleaves after C-2. In Bacillus sp. (strain RFL6), this protein is Type II restriction enzyme Bsp6I.